The primary structure comprises 1250 residues: DNA topoisomerase 3-alpha (1250 aa).

One can recognise a Toprim domain in the interval 27-171; the sequence is KYLNVAEKND…NISVYRATFS (145 aa). The Topo IA-type catalytic domain maps to 189 to 610; sequence DKRQSDAVDV…EQIAKYKQAY (422 aa). Catalysis depends on Tyr-356, which acts as the O-(5'-phospho-DNA)-tyrosine intermediate. Positions 769–835 are enriched in gly residues; the sequence is RGGGGGPGPG…GTGGGGLGGG (67 aa). 2 disordered regions span residues 769–899 and 953–1035; these read RGGG…GLDE and NGGT…TVLC. Basic and acidic residues predominate over residues 840–865; it reads PGGESKKSATKKPPNEPKPKKTKEPK. Positions 866-886 are enriched in low complexity; sequence AAPNKKTSSKSSGSIRSFFTS. Residues 956-965 are compositionally biased toward polar residues; that stretch reads TMPTESNGDQ. 2 stretches are compositionally biased toward basic and acidic residues: residues 966–994 and 1012–1021; these read QLDKSLSEWIKEQDKADERPMLWGTRERA and PRWDSVERDS. Low complexity predominate over residues 1022-1033; sequence TPPSSVPESETV. 4 residues coordinate Zn(2+): Cys-1035, Cys-1038, Cys-1061, and Cys-1067. Residues 1035–1076 form a GRF-type 1 zinc finger; that stretch reads CTGCQQPARQNTVRKNGPNLGRLYYKCPKPDECNFFQWADEP. The disordered stretch occupies residues 1069 to 1150; sequence FFQWADEPPS…TATPGDGEEV (82 aa). Residues 1079–1101 show a composition bias toward polar residues; that stretch reads SAKSKNSTGSAPQSTTSWGSNRV. The span at 1106–1134 shows a compositional bias: low complexity; sequence SIQQSNSQRGQSSMRSNSSSTVTITQTKT. Residues Cys-1152, Cys-1154, Cys-1177, and Cys-1184 each coordinate Zn(2+). Residues 1152–1193 form a GRF-type 2 zinc finger; that stretch reads CNCGQLASQLTVRKDGPNQGRPFYACPTREKSCGFFKWGDED. Positions 1188-1231 are disordered; it reads KWGDEDQNQGASSTSWGSANRNPPGRSQPTAITSDGPKTRRCGL. Positions 1195–1220 are enriched in polar residues; it reads NQGASSTSWGSANRNPPGRSQPTAIT.

It belongs to the type IA topoisomerase family.

The enzyme catalyses ATP-independent breakage of single-stranded DNA, followed by passage and rejoining.. Releases the supercoiling and torsional tension of DNA introduced during the DNA replication and transcription by transiently cleaving and rejoining one strand of the DNA duplex. Introduces a single-strand break via transesterification at a target site in duplex DNA. The scissile phosphodiester is attacked by the catalytic tyrosine of the enzyme, resulting in the formation of a DNA-(5'-phosphotyrosyl)-enzyme intermediate and the expulsion of a 3'-OH DNA strand. The free DNA strand than undergoes passage around the unbroken strand thus removing DNA supercoils. Finally, in the religation step, the DNA 3'-OH attacks the covalent intermediate to expel the active-site tyrosine and restore the DNA phosphodiester backbone. Weakly relaxes negative supercoils and displays a distinct preference for binding single-stranded DNA. The protein is DNA topoisomerase 3-alpha (Top3alpha) of Drosophila melanogaster (Fruit fly).